The following is a 212-amino-acid chain: Large ribosomal subunit protein uL4 (212 aa).

It belongs to the universal ribosomal protein uL4 family. Part of the 50S ribosomal subunit.

Functionally, one of the primary rRNA binding proteins, this protein initially binds near the 5'-end of the 23S rRNA. It is important during the early stages of 50S assembly. It makes multiple contacts with different domains of the 23S rRNA in the assembled 50S subunit and ribosome. In terms of biological role, forms part of the polypeptide exit tunnel. This Caulobacter sp. (strain K31) protein is Large ribosomal subunit protein uL4.